Consider the following 351-residue polypeptide: UDP-3-O-acylglucosamine N-acyltransferase 1 (351 aa).

The active-site Proton acceptor is the histidine 237.

It belongs to the transferase hexapeptide repeat family. LpxD subfamily. As to quaternary structure, homotrimer.

It catalyses the reaction a UDP-3-O-[(3R)-3-hydroxyacyl]-alpha-D-glucosamine + a (3R)-hydroxyacyl-[ACP] = a UDP-2-N,3-O-bis[(3R)-3-hydroxyacyl]-alpha-D-glucosamine + holo-[ACP] + H(+). The protein operates within bacterial outer membrane biogenesis; LPS lipid A biosynthesis. Functionally, catalyzes the N-acylation of UDP-3-O-acylglucosamine using 3-hydroxyacyl-ACP as the acyl donor. Is involved in the biosynthesis of lipid A, a phosphorylated glycolipid that anchors the lipopolysaccharide to the outer membrane of the cell. The polypeptide is UDP-3-O-acylglucosamine N-acyltransferase 1 (Legionella pneumophila (strain Paris)).